Consider the following 321-residue polypeptide: Bifunctional methyltransferase/endonuclease (321 aa).

A probable methylated-DNA--protein-cysteine methyltransferase region spans residues 1 to 86 (MLSVDYENFD…PLGSAEKMRR (86 aa)). Cys-61 is a catalytic residue. The interval 87–318 (LIRDGITITN…YDFSTRNTAI (232 aa)) is endonuclease V. Mg(2+) contacts are provided by Asp-145 and Asp-204.

The protein in the N-terminal section; belongs to the MGMT family. This sequence in the C-terminal section; belongs to the endonuclease V family. It depends on Mg(2+) as a cofactor.

The protein localises to the cytoplasm. The catalysed reaction is Endonucleolytic cleavage at apurinic or apyrimidinic sites to products with a 5'-phosphate.. Functionally, DNA repair enzyme involved in the repair of deaminated bases. Selectively cleaves double-stranded DNA at the second phosphodiester bond 3' to a deoxyinosine leaving behind the intact lesion on the nicked DNA. The sequence is that of Bifunctional methyltransferase/endonuclease from Thermoplasma volcanium (strain ATCC 51530 / DSM 4299 / JCM 9571 / NBRC 15438 / GSS1).